Here is a 116-residue protein sequence, read N- to C-terminus: Large ribosomal subunit protein bL19 (116 aa).

It belongs to the bacterial ribosomal protein bL19 family.

Functionally, this protein is located at the 30S-50S ribosomal subunit interface and may play a role in the structure and function of the aminoacyl-tRNA binding site. The chain is Large ribosomal subunit protein bL19 from Geobacillus sp. (strain WCH70).